We begin with the raw amino-acid sequence, 324 residues long: Beta-ketoacyl-[acyl-carrier-protein] synthase III (324 aa).

Catalysis depends on residues cysteine 114 and histidine 251. Residues 252 to 256 (QANLR) form an ACP-binding region. Asparagine 281 is an active-site residue.

This sequence belongs to the thiolase-like superfamily. FabH family. Homodimer.

The protein localises to the cytoplasm. The enzyme catalyses malonyl-[ACP] + acetyl-CoA + H(+) = 3-oxobutanoyl-[ACP] + CO2 + CoA. It participates in lipid metabolism; fatty acid biosynthesis. Functionally, catalyzes the condensation reaction of fatty acid synthesis by the addition to an acyl acceptor of two carbons from malonyl-ACP. Catalyzes the first condensation reaction which initiates fatty acid synthesis and may therefore play a role in governing the total rate of fatty acid production. Possesses both acetoacetyl-ACP synthase and acetyl transacylase activities. Its substrate specificity determines the biosynthesis of branched-chain and/or straight-chain of fatty acids. The chain is Beta-ketoacyl-[acyl-carrier-protein] synthase III from Dinoroseobacter shibae (strain DSM 16493 / NCIMB 14021 / DFL 12).